The primary structure comprises 391 residues: Glycosyltransferase afumC (391 aa).

This sequence belongs to the afumC glycosyltransferase family.

Its pathway is secondary metabolite biosynthesis. Activity is significantly decreased by addition of divalent cations such as Mg(2+), Mn(2+), Zn(2+), Ca(2+), Co(2+), Cu(2+), and Ni(2+); while Fe(2+) has little effect. Glycosyltransferase; part of the gene cluster that mediates the biosynthesis fumihopaside A, a hopane-type glucoside that enhances the thermotolerance and UV resistance of N.fumigata. The first step of fumihopaside A biosynthesis is performed by the squalene hopane cyclase afumA that catalyzes the cyclization of 3S-oxidosqualene into the hopene 21-beta-H-hopane-3-beta,22-diol. The cytochrome P450 monooxygenase afumB is responsible for both hydroxylation at C-24 and oxidations at C-30 of the afumA product. The glycosyltransferase afumC then catalyzes the glycosylation at C-24, using UDP-D-glucose as a donor, to produce fumihopaside A. AfumC is also able to accept UDP-D-galactose and UDP-D-glucuronic acid as donors to yield minor derivatives. Fumihopaside B, another minor derivative produced, is different from fumihopaside A due to the presence of a double bond between C-22 and C-29. The chain is Glycosyltransferase afumC from Aspergillus fumigatus (strain CBS 144.89 / FGSC A1163 / CEA10) (Neosartorya fumigata).